The sequence spans 494 residues: Neuronal acetylcholine receptor subunit alpha-6 (494 aa).

The N-terminal stretch at 1-30 (MLNSRDQGNLHSGLCLWLCGFLALFKGSTG) is a signal peptide. Topologically, residues 31 to 240 (CESEEQLFHR…TYSFYIRRLP (210 aa)) are extracellular. 2 N-linked (GlcNAc...) asparagine glycosylation sites follow: Asn-54 and Asn-171. 2 cysteine pairs are disulfide-bonded: Cys-158–Cys-172 and Cys-222–Cys-223. 3 helical membrane-spanning segments follow: residues 241 to 265 (MFYTINLIIPCLFISFLTVLVFYLP), 272 to 290 (VTLCISVLLSLTVFLLVIT), and 306 to 327 (YLLFTMIFVTLSIVVTVFVLNI). At 328–465 (HYRTPATHTM…WKYMAMVVDR (138 aa)) the chain is on the cytoplasmic side. Residues 399 to 423 (QKSSDIAPGKRRSSQQPARWVAENS) form a disordered region. At Ser-401 the chain carries Phosphoserine. The helical transmembrane segment at 466 to 485 (VFLWVFIIVCVFGTVGLFLQ) threads the bilayer.

The protein belongs to the ligand-gated ion channel (TC 1.A.9) family. Acetylcholine receptor (TC 1.A.9.1) subfamily. Alpha-6/CHRNA6 sub-subfamily. As to quaternary structure, neuronal AChR is composed of two different types of subunits: alpha and non-alpha (beta). CHRNA6/alpha-6 subunit can be combined to CHRNB2/beta-2 and CHRNA4/alpha-4 to give rise to functional receptors. Interacts with LYPD6. In terms of tissue distribution, predominantly expressed in only a few brain areas, including dopaminergic neurons, norepirephrine neurons and cells of the visual system.

Its subcellular location is the synaptic cell membrane. It carries out the reaction K(+)(in) = K(+)(out). The enzyme catalyses Na(+)(in) = Na(+)(out). It catalyses the reaction Ca(2+)(in) = Ca(2+)(out). With respect to regulation, activated by a myriad of ligands such as acetylcholine, cytisine and nicotine. CHRNA6 nAChR activity is inhibited by the antagonists alpha-conotoxin MII and PIA, a small disulfide-constrained peptides from cone snails. Its function is as follows. Component of neuronal acetylcholine receptors (nAChRs) that function as pentameric, ligand-gated cation channels with high calcium permeability among other activities. nAChRs are excitatory neurotrasnmitter receptors formed by a collection of nAChR subunits known to mediate synaptic transmission in the nervous system and the neuromuscular junction. Each nAchR subunit confers differential attributes to channel properties, including activation, deactivation and desensitization kinetics, pH sensitivity, cation permeability, and binding to allosteric modulators. CHRNA6 forms pentameric channels with CHRNB2 and CHRNA4 that exhibit high sensitivity to ACh and nicotine and are predominantly expressed in only a few brain areas, including dopaminergic neurons, norepirephrine neurons and cells of the visual system. nAChrs containing CHRNA6 subunits mediate endogenous cholinergic modulation of dopamine and gamma-aminobutyric acid (GABA) release in response to nicotine at nerve terminals. The chain is Neuronal acetylcholine receptor subunit alpha-6 (Chrna6) from Mus musculus (Mouse).